The sequence spans 457 residues: tRNA modification GTPase MnmE (457 aa).

Residues R25, E87, and R126 each contribute to the (6S)-5-formyl-5,6,7,8-tetrahydrofolate site. Residues 223–377 (GIATAIIGRP…IEEKINQLFF (155 aa)) enclose the TrmE-type G domain. N233 lines the K(+) pocket. GTP contacts are provided by residues 233 to 238 (NVGKSS), 252 to 258 (TDIAGTT), and 277 to 280 (DTAG). S237 provides a ligand contact to Mg(2+). Residues T252, I254, and T257 each contribute to the K(+) site. T258 contributes to the Mg(2+) binding site. (6S)-5-formyl-5,6,7,8-tetrahydrofolate is bound at residue K457.

This sequence belongs to the TRAFAC class TrmE-Era-EngA-EngB-Septin-like GTPase superfamily. TrmE GTPase family. Homodimer. Heterotetramer of two MnmE and two MnmG subunits. The cofactor is K(+).

The protein localises to the cytoplasm. Its function is as follows. Exhibits a very high intrinsic GTPase hydrolysis rate. Involved in the addition of a carboxymethylaminomethyl (cmnm) group at the wobble position (U34) of certain tRNAs, forming tRNA-cmnm(5)s(2)U34. The chain is tRNA modification GTPase MnmE from Streptococcus suis (strain 98HAH33).